We begin with the raw amino-acid sequence, 262 residues long: Sepiapterin reductase (262 aa).

Residue M1 is modified to N-acetylmethionine. An NADP(+)-binding site is contributed by 15-21 (GASRGFG). S33 is subject to Phosphoserine. Residue 43-44 (RS) participates in NADP(+) binding. S46 carries the phosphoserine; by CaMK2; in vitro modification. 70–71 (DL) provides a ligand contact to NADP(+). Residues 158 to 159 (SL) and Y171 each bind substrate. An NADP(+)-binding site is contributed by K175. S196 carries the phosphoserine; by CaMK2; in vitro modification. G200 provides a ligand contact to substrate. 202-207 (LDTNMQ) contributes to the NADP(+) binding site. Residue S214 is modified to Phosphoserine; by CaMK2; in vitro. Substrate is bound at residue D258.

Belongs to the sepiapterin reductase family. As to quaternary structure, homodimer. In vitro phosphorylation of Ser-46, Ser-196 and Ser-214 by CaMK2 does not change kinetic parameters.

Its subcellular location is the cytoplasm. It carries out the reaction L-erythro-7,8-dihydrobiopterin + NADP(+) = L-sepiapterin + NADPH + H(+). The catalysed reaction is (6R)-L-erythro-5,6,7,8-tetrahydrobiopterin + 2 NADP(+) = 6-pyruvoyl-5,6,7,8-tetrahydropterin + 2 NADPH + 2 H(+). Functionally, catalyzes the final one or two reductions in tetra-hydrobiopterin biosynthesis to form 5,6,7,8-tetrahydrobiopterin. This Rattus norvegicus (Rat) protein is Sepiapterin reductase (Spr).